A 500-amino-acid polypeptide reads, in one-letter code: ATP synthase subunit beta (500 aa).

157-164 (GGAGVGKT) lines the ATP pocket.

It belongs to the ATPase alpha/beta chains family. In terms of assembly, F-type ATPases have 2 components, CF(1) - the catalytic core - and CF(0) - the membrane proton channel. CF(1) has five subunits: alpha(3), beta(3), gamma(1), delta(1), epsilon(1). CF(0) has three main subunits: a(1), b(2) and c(9-12). The alpha and beta chains form an alternating ring which encloses part of the gamma chain. CF(1) is attached to CF(0) by a central stalk formed by the gamma and epsilon chains, while a peripheral stalk is formed by the delta and b chains.

Its subcellular location is the cell inner membrane. It catalyses the reaction ATP + H2O + 4 H(+)(in) = ADP + phosphate + 5 H(+)(out). Its function is as follows. Produces ATP from ADP in the presence of a proton gradient across the membrane. The catalytic sites are hosted primarily by the beta subunits. This chain is ATP synthase subunit beta, found in Salinibacter ruber (strain DSM 13855 / M31).